We begin with the raw amino-acid sequence, 746 residues long: WD repeat-containing protein 91 (746 aa).

Residues 183–215 (QRTNQVQEENEVLRQKLFALQAEIHRLKKEEQQ) are a coiled coil. S256 is subject to Phosphoserine. Residues 265-278 (LLPQSKKSPSRLSP) are compositionally biased toward low complexity. The disordered stretch occupies residues 265 to 336 (LLPQSKKSPS…QHRQRRLQDH (72 aa)). Polar residues predominate over residues 282 to 299 (PPQTQSSAKKESFGSQTT). 2 positions are modified to phosphoserine: S288 and S293. WD repeat units lie at residues 405-444 (EHHS…QTKA), 447-487 (ISKS…NLCE), 514-554 (AASS…QQLQ), 559-598 (PEPI…CAMS), 601-640 (AHCG…LKVS), 663-701 (VQVP…KVLE), and 708-746 (GHRA…AHKV).

Belongs to the WD repeat WDR91 family. In terms of assembly, interacts with WDR81; involved in early to late endosome cargo transport. Interacts with BECN1; negatively regulates the PI3 kinase/PI3K activity associated with endosomal membranes.

The protein localises to the early endosome membrane. It is found in the late endosome membrane. Functions as a negative regulator of the PI3 kinase/PI3K activity associated with endosomal membranes via BECN1, a core subunit of the PI3K complex. By modifying the phosphatidylinositol 3-phosphate/PtdInsP3 content of endosomal membranes may regulate endosome fusion, recycling, sorting and early to late endosome transport. It is for instance, required for the delivery of cargos like BST2/tetherin from early to late endosome and thereby participates indirectly to their degradation by the lysosome. May play a role in meiosis. The polypeptide is WD repeat-containing protein 91 (Bos taurus (Bovine)).